Here is a 397-residue protein sequence, read N- to C-terminus: 8-amino-7-oxononanoate synthase (397 aa).

Position 21 (R21) interacts with substrate. 110–111 (GY) provides a ligand contact to pyridoxal 5'-phosphate. H135 contributes to the substrate binding site. Pyridoxal 5'-phosphate contacts are provided by S181, H209, and T238. K241 carries the N6-(pyridoxal phosphate)lysine modification. Position 355 (T355) interacts with substrate.

Belongs to the class-II pyridoxal-phosphate-dependent aminotransferase family. BioF subfamily. In terms of assembly, homodimer. Pyridoxal 5'-phosphate serves as cofactor.

It carries out the reaction 6-carboxyhexanoyl-[ACP] + L-alanine + H(+) = (8S)-8-amino-7-oxononanoate + holo-[ACP] + CO2. Its pathway is cofactor biosynthesis; biotin biosynthesis. Its function is as follows. Catalyzes the decarboxylative condensation of pimeloyl-[acyl-carrier protein] and L-alanine to produce 8-amino-7-oxononanoate (AON), [acyl-carrier protein], and carbon dioxide. This Saccharophagus degradans (strain 2-40 / ATCC 43961 / DSM 17024) protein is 8-amino-7-oxononanoate synthase.